Here is a 430-residue protein sequence, read N- to C-terminus: Cytochrome P450 monooxygenase FGSG_15680 (430 aa).

Position 351 (Cys-351) interacts with heme.

The protein belongs to the cytochrome P450 family. The cofactor is heme.

The protein operates within mycotoxin biosynthesis. Its function is as follows. Cytochrome P450 monooxygenase; part of the gene cluster that mediates the biosynthesis of gramillins A and B, bicyclic lipopeptides that induce cell death in maize leaves but not in wheat leaves. The nonribosomal peptide synthetase GRA1 incorporates respectively a glutamic adic (Glu), a leucine (Leu), a serine (Ser), a hydroxyglutamine (HOGln), a 2-amino decanoic acid, and 2 cysteins (CysB and CysA). The biosynthesis of 2-amino decanoic acid incorporated in gramillins could be initiated by a fatty acid synthase composed of the alpha and beta subunits FGSG_00036 and FGSG_11656. The cytochrome P450 monooxygenase FGSG_15680 could hydroxylate the fatty acid chain. Subsequent oxidation to the ketone by the oxidoreductase FGSG_00048 and transamination by aminotransferase FGSG_00049 could form 2-amino-decanoic acid. On the other hand, FGSG_15680 could also be responsible for the HO-modified glutamine at the gamma-position. Whether hydroxylation occurs on the fully assembled product or on the Gln residue prior to assembly into the gramillins requires further proof. The thioredoxin FGSG_00043 could also be required for the disulfide-bond formation between CysA and CysB. The specific involvement of the remaining proteins from the cluster is more difficult to discern, but could have broader regulatory (FGSG_00040 and FGSG_11657) or enzymatic functions (FGSG_00044 and FGSG_00045). The final C-domain of GRA1 does not possess the expected sequence of a termination CT domain, often implicated in macrocyclization and release of a cyclopeptidein fungal NRPs; and the thioesterase FGSG_00047 may act in concert with the terminal C-domain of GRA1 to catalyze the formation of the macrocyclic anhydride and release of the products. The polypeptide is Cytochrome P450 monooxygenase FGSG_15680 (Gibberella zeae (strain ATCC MYA-4620 / CBS 123657 / FGSC 9075 / NRRL 31084 / PH-1) (Wheat head blight fungus)).